Reading from the N-terminus, the 169-residue chain is Cell division inhibitor SulA (169 aa).

Positions 106 to 112 (ALRTGNY) are ftsZ binding. Residues 162–169 (KIHSNLYH) form a lon protease binding region.

It belongs to the SulA family. Interacts with FtsZ. Post-translationally, is rapidly cleaved and degraded by the Lon protease once DNA damage is repaired.

Functionally, component of the SOS system and an inhibitor of cell division. Accumulation of SulA causes rapid cessation of cell division and the appearance of long, non-septate filaments. In the presence of GTP, binds a polymerization-competent form of FtsZ in a 1:1 ratio, thus inhibiting FtsZ polymerization and therefore preventing it from participating in the assembly of the Z ring. This mechanism prevents the premature segregation of damaged DNA to daughter cells during cell division. The sequence is that of Cell division inhibitor SulA from Escherichia coli O81 (strain ED1a).